Consider the following 557-residue polypeptide: Aspartate--tRNA ligase (557 aa).

An L-aspartate-binding site is contributed by E168. Residues 192–195 (QIYK) are aspartate. R214 lines the L-aspartate pocket. ATP is bound by residues 214–216 (RDE) and Q223. Residue H423 coordinates L-aspartate. E457 lines the ATP pocket. An L-aspartate-binding site is contributed by R464. Position 505-508 (505-508 (GLDR)) interacts with ATP.

The protein belongs to the class-II aminoacyl-tRNA synthetase family. Type 1 subfamily. As to quaternary structure, homodimer.

The protein localises to the cytoplasm. It catalyses the reaction tRNA(Asp) + L-aspartate + ATP = L-aspartyl-tRNA(Asp) + AMP + diphosphate. Functionally, catalyzes the attachment of L-aspartate to tRNA(Asp) in a two-step reaction: L-aspartate is first activated by ATP to form Asp-AMP and then transferred to the acceptor end of tRNA(Asp). This chain is Aspartate--tRNA ligase, found in Mycoplasma pneumoniae (strain ATCC 29342 / M129 / Subtype 1) (Mycoplasmoides pneumoniae).